The sequence spans 239 residues: 4-hydroxy-tetrahydrodipicolinate reductase (239 aa).

NAD(+) contacts are provided by residues 12-17, 94-96, and 118-121; these read GASGRM, GTT, and ASNF. The Proton donor/acceptor role is filled by His-150. (S)-2,3,4,5-tetrahydrodipicolinate is bound at residue His-151. Lys-154 functions as the Proton donor in the catalytic mechanism. 160–161 contacts (S)-2,3,4,5-tetrahydrodipicolinate; sequence GT.

Belongs to the DapB family.

The protein resides in the cytoplasm. It catalyses the reaction (S)-2,3,4,5-tetrahydrodipicolinate + NAD(+) + H2O = (2S,4S)-4-hydroxy-2,3,4,5-tetrahydrodipicolinate + NADH + H(+). It carries out the reaction (S)-2,3,4,5-tetrahydrodipicolinate + NADP(+) + H2O = (2S,4S)-4-hydroxy-2,3,4,5-tetrahydrodipicolinate + NADPH + H(+). It functions in the pathway amino-acid biosynthesis; L-lysine biosynthesis via DAP pathway; (S)-tetrahydrodipicolinate from L-aspartate: step 4/4. Its function is as follows. Catalyzes the conversion of 4-hydroxy-tetrahydrodipicolinate (HTPA) to tetrahydrodipicolinate. This is 4-hydroxy-tetrahydrodipicolinate reductase from Stenotrophomonas maltophilia (strain R551-3).